Reading from the N-terminus, the 186-residue chain is Probable GTP-binding protein EngB (186 aa).

Positions 18 to 186 (SKKEVCLIGR…LMLKIIDVIS (169 aa)) constitute an EngB-type G domain. GTP-binding positions include 26–33 (GRSNVGKS), 52–56 (GRTVT), 69–72 (DLPG), 135–138 (NKID), and 166–168 (ISA). Mg(2+)-binding residues include Ser33 and Thr54.

It belongs to the TRAFAC class TrmE-Era-EngA-EngB-Septin-like GTPase superfamily. EngB GTPase family. Requires Mg(2+) as cofactor.

In terms of biological role, necessary for normal cell division and for the maintenance of normal septation. The protein is Probable GTP-binding protein EngB of Mycoplasmoides gallisepticum (strain R(low / passage 15 / clone 2)) (Mycoplasma gallisepticum).